We begin with the raw amino-acid sequence, 167 residues long: Histidinol dehydrogenase (167 aa).

2 residues coordinate Zn(2+): Q109 and H112.

It belongs to the histidinol dehydrogenase family. As to quaternary structure, homodimer. It depends on Zn(2+) as a cofactor.

The catalysed reaction is L-histidinol + 2 NAD(+) + H2O = L-histidine + 2 NADH + 3 H(+). Its pathway is amino-acid biosynthesis; L-histidine biosynthesis; L-histidine from 5-phospho-alpha-D-ribose 1-diphosphate: step 9/9. Catalyzes the sequential NAD-dependent oxidations of L-histidinol to L-histidinaldehyde and then to L-histidine. The protein is Histidinol dehydrogenase (hisD) of Salmonella enteritidis.